The following is a 298-amino-acid chain: 4-hydroxy-tetrahydrodipicolinate synthase (298 aa).

A pyruvate-binding site is contributed by T51. Y139 acts as the Proton donor/acceptor in catalysis. Residue K167 is the Schiff-base intermediate with substrate of the active site. I209 is a pyruvate binding site.

This sequence belongs to the DapA family. As to quaternary structure, homotetramer; dimer of dimers.

It localises to the cytoplasm. It catalyses the reaction L-aspartate 4-semialdehyde + pyruvate = (2S,4S)-4-hydroxy-2,3,4,5-tetrahydrodipicolinate + H2O + H(+). The protein operates within amino-acid biosynthesis; L-lysine biosynthesis via DAP pathway; (S)-tetrahydrodipicolinate from L-aspartate: step 3/4. Functionally, catalyzes the condensation of (S)-aspartate-beta-semialdehyde [(S)-ASA] and pyruvate to 4-hydroxy-tetrahydrodipicolinate (HTPA). In Haemophilus influenzae (strain PittGG), this protein is 4-hydroxy-tetrahydrodipicolinate synthase.